The sequence spans 145 residues: Protein ImpA (145 aa).

Active-site for autocatalytic cleavage activity residues include S64 and K101.

This sequence belongs to the peptidase S24 family.

Involved in UV protection and mutation. The chain is Protein ImpA from Escherichia coli.